The following is a 215-amino-acid chain: Adenylate kinase (215 aa).

10-15 (GAGKGT) is an ATP binding site. The interval 30–59 (STGDILRANVREGTELGLAAKAYMDKGELV) is NMP. AMP contacts are provided by residues T31, R36, 57–59 (ELV), 85–88 (GYPR), and Q92. Residues 126–162 (GRLMCKCGASYHIISNPPKKDNVCDICGGEVFQRADD) are LID. ATP is bound at residue R127. Zn(2+) is bound by residues C130 and C132. 135–136 (SY) is a binding site for ATP. The Zn(2+) site is built by C149 and C152. Positions 159 and 170 each coordinate AMP. Residue K198 participates in ATP binding.

Belongs to the adenylate kinase family. As to quaternary structure, monomer.

The protein resides in the cytoplasm. The catalysed reaction is AMP + ATP = 2 ADP. The protein operates within purine metabolism; AMP biosynthesis via salvage pathway; AMP from ADP: step 1/1. Catalyzes the reversible transfer of the terminal phosphate group between ATP and AMP. Plays an important role in cellular energy homeostasis and in adenine nucleotide metabolism. In Methanosarcina acetivorans (strain ATCC 35395 / DSM 2834 / JCM 12185 / C2A), this protein is Adenylate kinase.